Consider the following 462-residue polypeptide: A-type ATP synthase subunit B (462 aa).

It belongs to the ATPase alpha/beta chains family. In terms of assembly, has multiple subunits with at least A(3), B(3), C, D, E, F, H, I and proteolipid K(x).

The protein localises to the cell membrane. Component of the A-type ATP synthase that produces ATP from ADP in the presence of a proton gradient across the membrane. The B chain is a regulatory subunit. This chain is A-type ATP synthase subunit B, found in Methanococcus maripaludis (strain C6 / ATCC BAA-1332).